The following is a 78-amino-acid chain: MSDIEQRVKKIVSEQLGANEADVKNESSFVDDLGADSLDTVELVMALEEEFDCEIPDEEAEKITTVQQAIDYVNANLK.

The Carrier domain maps to 2-77; sequence SDIEQRVKKI…QAIDYVNANL (76 aa). The residue at position 37 (Ser-37) is an O-(pantetheine 4'-phosphoryl)serine.

The protein belongs to the acyl carrier protein (ACP) family. In terms of processing, 4'-phosphopantetheine is transferred from CoA to a specific serine of apo-ACP by AcpS. This modification is essential for activity because fatty acids are bound in thioester linkage to the sulfhydryl of the prosthetic group.

The protein resides in the cytoplasm. It functions in the pathway lipid metabolism; fatty acid biosynthesis. In terms of biological role, carrier of the growing fatty acid chain in fatty acid biosynthesis. The protein is Acyl carrier protein of Methylobacillus flagellatus (strain ATCC 51484 / DSM 6875 / VKM B-1610 / KT).